An 859-amino-acid chain; its full sequence is DNA mismatch repair protein MutS (859 aa).

Residue 615-622 (GPNMGGKS) coordinates ATP.

The protein belongs to the DNA mismatch repair MutS family.

This protein is involved in the repair of mismatches in DNA. It is possible that it carries out the mismatch recognition step. This protein has a weak ATPase activity. The polypeptide is DNA mismatch repair protein MutS (Chromohalobacter salexigens (strain ATCC BAA-138 / DSM 3043 / CIP 106854 / NCIMB 13768 / 1H11)).